A 1385-amino-acid polypeptide reads, in one-letter code: DNA-directed RNA polymerase subunit beta' (1385 aa).

Residues C72, C74, C87, and C90 each contribute to the Zn(2+) site. The Mg(2+) site is built by D467, D469, and D471. Positions 829, 910, 917, and 920 each coordinate Zn(2+).

The protein belongs to the RNA polymerase beta' chain family. In terms of assembly, the RNAP catalytic core consists of 2 alpha, 1 beta, 1 beta' and 1 omega subunit. When a sigma factor is associated with the core the holoenzyme is formed, which can initiate transcription. The cofactor is Mg(2+). Requires Zn(2+) as cofactor.

It carries out the reaction RNA(n) + a ribonucleoside 5'-triphosphate = RNA(n+1) + diphosphate. In terms of biological role, DNA-dependent RNA polymerase catalyzes the transcription of DNA into RNA using the four ribonucleoside triphosphates as substrates. The chain is DNA-directed RNA polymerase subunit beta' from Elusimicrobium minutum (strain Pei191).